The primary structure comprises 1057 residues: Carbamoyl phosphate synthase large chain (1057 aa).

The interval 1-401 (MPKRDDIKTI…SLLKAIRSLE (401 aa)) is carboxyphosphate synthetic domain. 12 residues coordinate ATP: Arg129, Arg169, Gly175, Gly176, Lys208, Ile210, Glu215, Gly241, Ile242, His243, Gln284, and Glu298. The ATP-grasp 1 domain maps to 133 to 327 (RTLMNDLNVP…IAKLAAKIAV (195 aa)). The Mg(2+) site is built by Gln284, Glu298, and Asn300. The Mn(2+) site is built by Gln284, Glu298, and Asn300. Residues 402 to 546 (YGVHHLGLSN…YGTYEYENES (145 aa)) form an oligomerization domain region. Residues 547 to 929 (IVTDKEKILV…ALYKGLTGSG (383 aa)) are carbamoyl phosphate synthetic domain. The region spanning 671–861 (EALLREIAVP…MAQLAMRAIM (191 aa)) is the ATP-grasp 2 domain. Residues Arg707, Arg746, Leu748, Glu752, Gly777, Val778, His779, Ser780, Gln820, and Glu832 each contribute to the ATP site. Residues Gln820, Glu832, and Asn834 each contribute to the Mg(2+) site. Mn(2+)-binding residues include Gln820, Glu832, and Asn834. Residues 930–1057 (FEVKDHGTVL…ESMTFTMRNV (128 aa)) form the MGS-like domain. The interval 930–1057 (FEVKDHGTVL…ESMTFTMRNV (128 aa)) is allosteric domain.

This sequence belongs to the CarB family. Composed of two chains; the small (or glutamine) chain promotes the hydrolysis of glutamine to ammonia, which is used by the large (or ammonia) chain to synthesize carbamoyl phosphate. Tetramer of heterodimers (alpha,beta)4. The cofactor is Mg(2+). Mn(2+) is required as a cofactor.

It catalyses the reaction hydrogencarbonate + L-glutamine + 2 ATP + H2O = carbamoyl phosphate + L-glutamate + 2 ADP + phosphate + 2 H(+). It carries out the reaction hydrogencarbonate + NH4(+) + 2 ATP = carbamoyl phosphate + 2 ADP + phosphate + 2 H(+). It participates in amino-acid biosynthesis; L-arginine biosynthesis; carbamoyl phosphate from bicarbonate: step 1/1. Its pathway is pyrimidine metabolism; UMP biosynthesis via de novo pathway; (S)-dihydroorotate from bicarbonate: step 1/3. Its function is as follows. Large subunit of the glutamine-dependent carbamoyl phosphate synthetase (CPSase). CPSase catalyzes the formation of carbamoyl phosphate from the ammonia moiety of glutamine, carbonate, and phosphate donated by ATP, constituting the first step of 2 biosynthetic pathways, one leading to arginine and/or urea and the other to pyrimidine nucleotides. The large subunit (synthetase) binds the substrates ammonia (free or transferred from glutamine from the small subunit), hydrogencarbonate and ATP and carries out an ATP-coupled ligase reaction, activating hydrogencarbonate by forming carboxy phosphate which reacts with ammonia to form carbamoyl phosphate. In Staphylococcus epidermidis (strain ATCC 12228 / FDA PCI 1200), this protein is Carbamoyl phosphate synthase large chain.